The primary structure comprises 310 residues: Zinc transporter ZIP9 (310 aa).

8 helical membrane passes run 7–27, 35–55, 108–128, 148–168, 178–198, 212–232, 246–266, and 289–309; these read ISLL…IPLA, LKLI…AVII, ACIG…DQIG, ITTT…LGAA, LIVF…LVSF, HLLV…LGLS, GVAM…HVLP, and VEVV…VGHH.

It belongs to the ZIP transporter (TC 2.A.5) family. In terms of tissue distribution, expressed in brain, liver, ovary, and testis.

The protein localises to the golgi apparatus. Its subcellular location is the trans-Golgi network membrane. It is found in the cell membrane. It localises to the cytoplasm. The protein resides in the perinuclear region. The protein localises to the mitochondrion. Its subcellular location is the nucleus. The catalysed reaction is Zn(2+)(in) = Zn(2+)(out). Its function is as follows. Has dual functions as a membrane-bound androgen receptor and as an androgen-dependent zinc transporter both of which are mediated through G protein activation and are required for the androgen-dependent apoptotic response. Upon androgen binding, mediates apoptosis by directly activating a stimulatory G protein that leads to increased cAMP levels and MAP kinase activity and which is accompanied by increased intracellular free zinc levels. This Micropogonias undulatus (Atlantic croaker) protein is Zinc transporter ZIP9.